The following is a 607-amino-acid chain: UvrABC system protein C (607 aa).

One can recognise a GIY-YIG domain in the interval 16–94 (GRPGVYRMFD…IKEWRPPYNI (79 aa)). The 36-residue stretch at 203-238 (NALSDELNATMEKAAMALDFERAAELRDQVALLRRV) folds into the UVR domain.

Belongs to the UvrC family. As to quaternary structure, interacts with UvrB in an incision complex.

The protein resides in the cytoplasm. The UvrABC repair system catalyzes the recognition and processing of DNA lesions. UvrC both incises the 5' and 3' sides of the lesion. The N-terminal half is responsible for the 3' incision and the C-terminal half is responsible for the 5' incision. In Pseudomonas savastanoi pv. phaseolicola (strain 1448A / Race 6) (Pseudomonas syringae pv. phaseolicola (strain 1448A / Race 6)), this protein is UvrABC system protein C.